Consider the following 171-residue polypeptide: Cardioactive peptide (171 aa).

The signal sequence occupies residues 1-26 (MQMYHVVLGCSLAILLVILDIPQASC). The propeptide occupies 27 to 49 (DDVVIQKRQVDPAEMDRLLDPKR). C54 and C60 are joined by a disulfide. A Cysteine amide modification is found at C60. Residues 64-171 (RSDESMGTLV…QEEITKPWSR (108 aa)) constitute a propeptide that is removed on maturation. A disordered region spans residues 116–171 (QSNQFGAGMDRPLPLPIAGYRRKRFADPESQAPAPHSNLPRATSQLQEEITKPWSR).

In terms of tissue distribution, central nervous system; most neurons exhibit coexpression with burs.

The protein resides in the secreted. In terms of biological role, cardioregulatory neurohormone that increases heart beat rate during adult wing inflation; has no effect on beat amplitude. The effect of CCAP is both ino- and chronotropic. This is Cardioactive peptide from Periplaneta americana (American cockroach).